We begin with the raw amino-acid sequence, 1033 residues long: uncharacterized protein (1033 aa).

Coiled-coil stretches lie at residues 212-326 (EIFK…KMNN), 405-582 (ILNN…LYKF), 615-771 (LEKE…LKLN), and 797-1019 (KMKI…NIDN).

This is an uncharacterized protein from Plasmodium falciparum (isolate 3D7).